The chain runs to 289 residues: Probable protein phosphatase 2C 39 (289 aa).

The PPM-type phosphatase domain maps to 41 to 288 (THGFHLVKGK…DDISVVVVKF (248 aa)). Residues Asp78, Gly79, Asp240, and Asp279 each contribute to the Mn(2+) site.

The protein belongs to the PP2C family. Mg(2+) is required as a cofactor. Requires Mn(2+) as cofactor.

It carries out the reaction O-phospho-L-seryl-[protein] + H2O = L-seryl-[protein] + phosphate. It catalyses the reaction O-phospho-L-threonyl-[protein] + H2O = L-threonyl-[protein] + phosphate. This chain is Probable protein phosphatase 2C 39, found in Arabidopsis thaliana (Mouse-ear cress).